The primary structure comprises 148 residues: Sec-independent protein translocase protein TatB (148 aa).

A helical membrane pass occupies residues 1-21 (MFDIGFWELVVIGIVALVVLG).

This sequence belongs to the TatB family. As to quaternary structure, the Tat system comprises two distinct complexes: a TatABC complex, containing multiple copies of TatA, TatB and TatC subunits, and a separate TatA complex, containing only TatA subunits. Substrates initially bind to the TatABC complex, which probably triggers association of the separate TatA complex to form the active translocon.

Its subcellular location is the cell inner membrane. Part of the twin-arginine translocation (Tat) system that transports large folded proteins containing a characteristic twin-arginine motif in their signal peptide across membranes. Together with TatC, TatB is part of a receptor directly interacting with Tat signal peptides. TatB may form an oligomeric binding site that transiently accommodates folded Tat precursor proteins before their translocation. This Aeromonas salmonicida (strain A449) protein is Sec-independent protein translocase protein TatB.